Consider the following 716-residue polypeptide: Leucine-rich repeat neuronal protein 1 (716 aa).

The first 25 residues, 1–25 (MARMSFVLAAYQMVLSLLMTSLTGS), serve as a signal peptide directing secretion. The LRRNT domain occupies 26-72 (SLQSSECPQLCVCEIRPWFTPQSTYREATTVDCNDLRLTRIPSNLSS). At 26 to 631 (SLQSSECPQL…DISDQETSTA (606 aa)) the chain is on the extracellular side. N-linked (GlcNAc...) asparagine glycosylation occurs at asparagine 69. LRR repeat units follow at residues 73–95 (DTQVLLLQSNNIAKTVDELQQLF), 96–117 (NLTELDFSQNNFTNIKEVGLAN), 120–141 (QLTTLHLEENQITEMNDYCLQD), 144–165 (NLQELYINHNQISTISANAFSG), 168–189 (NLLRLHLNSNKLKVIDSRWFDS), 192–213 (NLEILMIGENPVIGILDMNFKP), 216–237 (NLRSLVLAGMYLTDIPGNALVG), 240–261 (SLESLSFYDNKLVKVPQLALQK), and 264–285 (NLKFLDLNKNPIHKIQEGDFKN). N-linked (GlcNAc...) asparagine glycosylation is found at asparagine 96, asparagine 106, and asparagine 117. The 54-residue stretch at 371-424 (NPLRCDCVIHWINSNKTNIRFMEPLSMFCAMPPEYRGQQVKEVLIQDSSEQCLP) folds into the LRRCT domain. A glycan (N-linked (GlcNAc...) asparagine) is linked at asparagine 385. An Ig-like C2-type domain is found at 424–515 (PMISHDTFPN…GADTRVVMIK (92 aa)). The cysteines at positions 447 and 499 are disulfide-linked. N-linked (GlcNAc...) asparagine glycosylation is found at asparagine 517, asparagine 582, and asparagine 611. The region spanning 525–617 (QVLKIYVKQT…SCVNVTTKNA (93 aa)) is the Fibronectin type-III domain. A helical transmembrane segment spans residues 632–652 (LAAVMGSMFAVISLASIAVYI). Topologically, residues 653–716 (AKRFKRKNYH…VDTSRSYYMW (64 aa)) are cytoplasmic. A compositionally biased stretch (basic and acidic residues) spans 691–700 (DSEKDKDGTA). Residues 691–716 (DSEKDKDGTADTKPTQVDTSRSYYMW) are disordered. Residues 702-716 (TKPTQVDTSRSYYMW) are compositionally biased toward polar residues.

The protein localises to the membrane. The polypeptide is Leucine-rich repeat neuronal protein 1 (LRRN1) (Bos taurus (Bovine)).